A 406-amino-acid polypeptide reads, in one-letter code: Kelch domain-containing protein 2 (406 aa).

6 Kelch repeats span residues 31–85 (ERSG…NTEG), 92–136 (SGSC…ERID), 148–207 (LGVW…AWSQ), 221–259 (HACATVGNKGFVFGGRYRDARMNDLHYLNLDTWEWNELI), 271–311 (HSLT…IQFN), and 322–359 (HTACASDEGEVIVFGGCANNLLVHHRAAHSNEVLIFSV).

In terms of assembly, component of a CRL2(KLHDC2) E3 ubiquitin-protein ligase complex, also named ECS(KLHDC2) complex, composed of CUL2, Elongin BC (ELOB and ELOC), RBX1 and substrate-specific adapter KLHDC2. May form oligomers as a KLHDC2-ELOB-ELOC complex; this interaction is autoinhibitory for the E3 ligase complex as the substrate-binding site of KLHDC2 is blocked in the oligomer. Interacts with CREB3; interaction is direct and specific as it does not interact with CREB1, ATF4, ATF6, JUN, FOS, CEBPA or herpes simplex virus transactivator VP16. Autoubiquitinated by the CRL2(KLHDC2) E3 ligase complex.

Its subcellular location is the nucleus. The protein operates within protein modification; protein ubiquitination. Its function is as follows. Substrate-recognition component of a Cul2-RING (CRL2) E3 ubiquitin-protein ligase complex of the DesCEND (destruction via C-end degrons) pathway, which recognizes a C-degron located at the extreme C terminus of target proteins, leading to their ubiquitination and degradation. The C-degron recognized by the DesCEND pathway is usually a motif of less than ten residues and can be present in full-length proteins, truncated proteins or proteolytically cleaved forms. The CRL2(KLHDC2) complex specifically recognizes proteins with a diglycine (Gly-Gly) at the C-terminus, leading to their ubiquitination and degradation. The CRL2(KLHDC2) complex mediates ubiquitination and degradation of truncated SELENOK and SELENOS selenoproteins produced by failed UGA/Sec decoding, which end with a diglycine. The CRL2(KLHDC2) complex also recognizes proteolytically cleaved proteins ending with Gly-Gly, such as the N-terminal fragment of USP1, leading to their degradation. May also act as an indirect repressor of CREB3-mediated transcription by interfering with CREB3-DNA-binding. This chain is Kelch domain-containing protein 2, found in Mus musculus (Mouse).